Here is a 213-residue protein sequence, read N- to C-terminus: Orotate phosphoribosyltransferase (213 aa).

K26 is a 5-phospho-alpha-D-ribose 1-diphosphate binding site. Position 34–35 (34–35 (FF)) interacts with orotate. 5-phospho-alpha-D-ribose 1-diphosphate contacts are provided by residues 72-73 (YK), R99, K100, K103, H105, and 124-132 (DDVITAGTA). Positions 128 and 156 each coordinate orotate.

The protein belongs to the purine/pyrimidine phosphoribosyltransferase family. PyrE subfamily. As to quaternary structure, homodimer. Requires Mg(2+) as cofactor.

It carries out the reaction orotidine 5'-phosphate + diphosphate = orotate + 5-phospho-alpha-D-ribose 1-diphosphate. It functions in the pathway pyrimidine metabolism; UMP biosynthesis via de novo pathway; UMP from orotate: step 1/2. Its function is as follows. Catalyzes the transfer of a ribosyl phosphate group from 5-phosphoribose 1-diphosphate to orotate, leading to the formation of orotidine monophosphate (OMP). The polypeptide is Orotate phosphoribosyltransferase (Thioalkalivibrio sulfidiphilus (strain HL-EbGR7)).